The sequence spans 134 residues: ATP synthase epsilon chain (134 aa).

Belongs to the ATPase epsilon chain family. As to quaternary structure, F-type ATPases have 2 components, CF(1) - the catalytic core - and CF(0) - the membrane proton channel. CF(1) has five subunits: alpha(3), beta(3), gamma(1), delta(1), epsilon(1). CF(0) has three main subunits: a, b and c.

The protein localises to the cell inner membrane. Its function is as follows. Produces ATP from ADP in the presence of a proton gradient across the membrane. This chain is ATP synthase epsilon chain, found in Nitratidesulfovibrio vulgaris (strain ATCC 29579 / DSM 644 / CCUG 34227 / NCIMB 8303 / VKM B-1760 / Hildenborough) (Desulfovibrio vulgaris).